The following is a 396-amino-acid chain: Decapping nuclease RAI1 (396 aa).

A substrate-binding site is contributed by 107-109; that stretch reads YRG. E179 lines the a divalent metal cation pocket. E228 contacts substrate. 3 residues coordinate a divalent metal cation: D230, E249, and L250. Residues K251 and Q275 each coordinate substrate.

Belongs to the DXO/Dom3Z family. As to quaternary structure, interacts with RAT1; the interaction is direct, stabilizes RAT1 protein structure and stimulates its exoribonuclease activity. The interaction also stimulates RAI1 pyrophosphohydrolase activity, probably by recruiting it to mRNA substrates. It depends on a divalent metal cation as a cofactor.

It is found in the nucleus. The enzyme catalyses a 5'-end NAD(+)-phospho-ribonucleoside in mRNA + H2O = a 5'-end phospho-ribonucleoside in mRNA + NAD(+) + H(+). It carries out the reaction a 5'-end (N(7)-methyl 5'-triphosphoguanosine)-ribonucleoside-ribonucleotide in mRNA + H2O = a (N(7)-methyl 5'-triphosphoguanosine)-nucleoside + a 5'-end phospho-ribonucleoside in mRNA + H(+). It catalyses the reaction a 5'-end triphospho-ribonucleoside in mRNA + H2O = a 5'-end phospho-ribonucleoside in mRNA + diphosphate + H(+). Decapping enzyme for NAD-capped RNAs: specifically hydrolyzes the nicotinamide adenine dinucleotide (NAD) cap from a subset of RNAs by removing the entire NAD moiety from the 5'-end of an NAD-capped RNA. The NAD-cap is present at the 5'-end of some RNAs and snoRNAs. In contrast to the canonical 5'-end N7 methylguanosine (m7G) cap, the NAD cap promotes mRNA decay. Also acts as a non-canonical decapping enzyme that removes the entire cap structure of m7G capped or incompletely capped RNAs. Has decapping activity toward incomplete 5'-end m7G cap mRNAs such as unmethylated 5'-end-capped RNA (cap0), while it has no activity toward 2'-O-ribose methylated m7G cap (cap1). Also possesses RNA 5'-pyrophosphohydrolase activity by hydrolyzing the 5'-end triphosphate to release pyrophosphates. Stimulates exoribonuclease activity of Rat1, allowing it to degrade RNAs with stable secondary structure more effectively. The protein is Decapping nuclease RAI1 of Scheffersomyces stipitis (strain ATCC 58785 / CBS 6054 / NBRC 10063 / NRRL Y-11545) (Yeast).